Consider the following 582-residue polypeptide: DNA primase (582 aa).

A CHC2-type zinc finger spans residues 40–64 (CPFHHEKTPSFTVSQKKQFYHCFGC). The Toprim domain occupies 259-341 (EMLLVVEGYM…GRQLKFVFLP (83 aa)). Mg(2+)-binding residues include glutamate 265, aspartate 309, and aspartate 311.

This sequence belongs to the DnaG primase family. As to quaternary structure, monomer. Interacts with DnaB. Zn(2+) is required as a cofactor. It depends on Mg(2+) as a cofactor.

It carries out the reaction ssDNA + n NTP = ssDNA/pppN(pN)n-1 hybrid + (n-1) diphosphate.. RNA polymerase that catalyzes the synthesis of short RNA molecules used as primers for DNA polymerase during DNA replication. This is DNA primase from Pasteurella multocida (strain Pm70).